The chain runs to 360 residues: Peptide chain release factor 1 (360 aa).

The residue at position 235 (glutamine 235) is an N5-methylglutamine.

The protein belongs to the prokaryotic/mitochondrial release factor family. Methylated by PrmC. Methylation increases the termination efficiency of RF1.

Its subcellular location is the cytoplasm. Functionally, peptide chain release factor 1 directs the termination of translation in response to the peptide chain termination codons UAG and UAA. In Burkholderia vietnamiensis (strain G4 / LMG 22486) (Burkholderia cepacia (strain R1808)), this protein is Peptide chain release factor 1.